Reading from the N-terminus, the 65-residue chain is Large ribosomal subunit protein bL35 (65 aa).

2 disordered regions span residues 1–23 (MPKI…GKVK) and 29–48 (GSHI…RQSH). Over residues 33–43 (LAKKSRKRKRD) the composition is skewed to basic residues.

This sequence belongs to the bacterial ribosomal protein bL35 family.

The polypeptide is Large ribosomal subunit protein bL35 (Desulfatibacillum aliphaticivorans).